The primary structure comprises 71 residues: Small, acid-soluble spore protein I (71 aa).

Belongs to the SspI family.

Its subcellular location is the spore core. The protein is Small, acid-soluble spore protein I of Bacillus velezensis (strain DSM 23117 / BGSC 10A6 / LMG 26770 / FZB42) (Bacillus amyloliquefaciens subsp. plantarum).